Reading from the N-terminus, the 62-residue chain is Alpha-toxin Tf4 (62 aa).

Positions K2–C62 constitute an LCN-type CS-alpha/beta domain. 4 disulfides stabilise this stretch: C12-C62, C16-C38, C24-C43, and C28-C45. C62 carries the post-translational modification Cysteine amide.

In terms of tissue distribution, expressed by the venom gland.

The protein resides in the secreted. Alpha toxins bind voltage-independently at site-3 of sodium channels (Nav) and inhibit the inactivation of the activated channels, thereby blocking neuronal transmission. This toxin is toxic to frogs but non-toxic to insect larvae (T.molitor), mammals (rats) and crustaceans (crabs) at the doses assayed. This is Alpha-toxin Tf4 from Tityus fasciolatus (Central Brazilian scorpion).